We begin with the raw amino-acid sequence, 79 residues long: Conotoxin Kt6.1 (79 aa).

An N-terminal signal peptide occupies residues 1 to 22 (MKLTCVLIISVLFLTASQLITA). A propeptide spanning residues 23-47 (VYSRDKQQYRAARLRDEMRNLKGAR) is cleaved from the precursor. Intrachain disulfides connect Cys-49–Cys-62, Cys-56–Cys-67, and Cys-61–Cys-77. Pro-60 and Pro-63 each carry 4-hydroxyproline.

The protein belongs to the conotoxin O1 superfamily. Expressed by the venom duct.

It localises to the secreted. Its function is as follows. Ion channel inhibitor that inhibits the increase in intracellular calcium upon depolarization in DRG neurons. In vivo, both intraperitoneal and intracranial injections into mice induce hyperactivity. The protein is Conotoxin Kt6.1 of Conus kintoki (Cone snail).